A 116-amino-acid polypeptide reads, in one-letter code: PTS system N,N'-diacetylchitobiose-specific EIIA component (116 aa).

The region spanning 15–113 is the PTS EIIA type-3 domain; the sequence is EELEEVVMGL…ITELIELHEK (99 aa). Histidine 89 functions as the Tele-phosphohistidine intermediate in the catalytic mechanism. Histidine 89 bears the Phosphohistidine; by HPr mark.

Forms a complex with ChbB (EIIB). ChbA is a homotrimer. It depends on Mg(2+) as a cofactor.

The protein resides in the cytoplasm. The phosphoenolpyruvate-dependent sugar phosphotransferase system (sugar PTS), a major carbohydrate active transport system, catalyzes the phosphorylation of incoming sugar substrates concomitantly with their translocation across the cell membrane. The enzyme II ChbABC PTS system is involved in the transport of the chitin disaccharide N,N'-diacetylchitobiose (GlcNAc2). The protein is PTS system N,N'-diacetylchitobiose-specific EIIA component (chbA) of Escherichia coli O157:H7.